Here is a 206-residue protein sequence, read N- to C-terminus: Large ribosomal subunit protein uL4 (206 aa).

The tract at residues 63–85 (MYKQKGTGSARHGSARAPQFRGG) is disordered.

The protein belongs to the universal ribosomal protein uL4 family. Part of the 50S ribosomal subunit.

Its function is as follows. One of the primary rRNA binding proteins, this protein initially binds near the 5'-end of the 23S rRNA. It is important during the early stages of 50S assembly. It makes multiple contacts with different domains of the 23S rRNA in the assembled 50S subunit and ribosome. Forms part of the polypeptide exit tunnel. The sequence is that of Large ribosomal subunit protein uL4 from Beijerinckia indica subsp. indica (strain ATCC 9039 / DSM 1715 / NCIMB 8712).